The following is a 951-amino-acid chain: Cadmium/zinc-transporting ATPase HMA2 (951 aa).

Over 1–83 (MASKKMTKSY…VRVTGETNFK (83 aa)) the chain is Cytoplasmic. In terms of domain architecture, HMA spans 7–73 (TKSYFDVLGI…ALNQAQLEAN (67 aa)). The helical transmembrane segment at 84–105 (NKWPSPFAVVSGILLLLSFFKY) threads the bilayer. At 106–108 (LYS) the chain is on the extracellular side. A helical transmembrane segment spans residues 109–128 (PFRWLAVAAVVAGIYPILAK). The Cytoplasmic portion of the chain corresponds to 129 to 135 (AVASLAR). A helical membrane pass occupies residues 136–156 (FRIDINILVVVTVGATIGMQD). Y157 is a topological domain (extracellular). A helical membrane pass occupies residues 158–178 (TEAAVVVFLFTIAEWLQSRAS). Residues 179–304 (YKASAVMQSL…KTETQRFIDK (126 aa)) lie on the Cytoplasmic side of the membrane. Residues 305 to 327 (CSKYYTPAIILISICFVAIPFAL) form a helical membrane-spanning segment. At 328–335 (KVHNLKHW) the chain is on the extracellular side. Residues 336 to 353 (VHLALVVLVSACPCGLIL) traverse the membrane as a helical segment. The Cytoplasmic portion of the chain corresponds to 354-647 (STPVATFCAL…KLAKRAKRKV (294 aa)). D391 functions as the 4-aspartylphosphate intermediate in the catalytic mechanism. Residues D592 and D596 each contribute to the Mg(2+) site. Residues 648–667 (VENVVISITMKGAILALAFA) traverse the membrane as a helical segment. Residues 668–671 (GHPL) are Extracellular-facing. A helical membrane pass occupies residues 672-691 (IWAAVLADVGTCLLVILNSM). Over 692 to 951 (LLLSDKHKTG…VGTLKEIVIE (260 aa)) the chain is Cytoplasmic. Residues 841-851 (ELQQSCHDKPS) show a composition bias toward basic and acidic residues. The segment at 841-866 (ELQQSCHDKPSGLDIGTGPKHEGSST) is disordered.

Belongs to the cation transport ATPase (P-type) (TC 3.A.3) family. Type IB subfamily. As to expression, predominantly expressed in the vascular tissues of roots, stems, and leaves. Also detected in developing anthers.

The protein resides in the cell membrane. It catalyses the reaction Zn(2+)(in) + ATP + H2O = Zn(2+)(out) + ADP + phosphate + H(+). The enzyme catalyses Cd(2+)(in) + ATP + H2O = Cd(2+)(out) + ADP + phosphate + H(+). Plays an important role in zinc transport and homeostasis. Could also be involved in cadmium detoxification. The polypeptide is Cadmium/zinc-transporting ATPase HMA2 (HMA2) (Arabidopsis thaliana (Mouse-ear cress)).